Reading from the N-terminus, the 341-residue chain is tRNA dimethylallyltransferase (341 aa).

Glycine 15–threonine 22 contacts ATP. Threonine 17 to threonine 22 is a substrate binding site. Interaction with substrate tRNA regions lie at residues aspartate 44–leucine 47, glutamine 168–arginine 172, arginine 253–arginine 258, and lysine 302–arginine 309.

Belongs to the IPP transferase family. Monomer. Requires Mg(2+) as cofactor.

It catalyses the reaction adenosine(37) in tRNA + dimethylallyl diphosphate = N(6)-dimethylallyladenosine(37) in tRNA + diphosphate. In terms of biological role, catalyzes the transfer of a dimethylallyl group onto the adenine at position 37 in tRNAs that read codons beginning with uridine, leading to the formation of N6-(dimethylallyl)adenosine (i(6)A). In Verminephrobacter eiseniae (strain EF01-2), this protein is tRNA dimethylallyltransferase.